Here is a 460-residue protein sequence, read N- to C-terminus: Phosphomethylpyrimidine synthase (460 aa).

Substrate-binding positions include asparagine 80, methionine 109, tyrosine 139, histidine 175, 195–197 (SRG), 236–239 (DSLR), and glutamate 275. Residue histidine 279 coordinates Zn(2+). Tyrosine 302 is a binding site for substrate. Histidine 343 lines the Zn(2+) pocket. Positions 423, 426, and 431 each coordinate [4Fe-4S] cluster.

It belongs to the ThiC family. [4Fe-4S] cluster serves as cofactor.

It carries out the reaction 5-amino-1-(5-phospho-beta-D-ribosyl)imidazole + S-adenosyl-L-methionine = 4-amino-2-methyl-5-(phosphooxymethyl)pyrimidine + CO + 5'-deoxyadenosine + formate + L-methionine + 3 H(+). It functions in the pathway cofactor biosynthesis; thiamine diphosphate biosynthesis. Functionally, catalyzes the synthesis of the hydroxymethylpyrimidine phosphate (HMP-P) moiety of thiamine from aminoimidazole ribotide (AIR) in a radical S-adenosyl-L-methionine (SAM)-dependent reaction. This chain is Phosphomethylpyrimidine synthase, found in Rippkaea orientalis (strain PCC 8801 / RF-1) (Cyanothece sp. (strain PCC 8801)).